The primary structure comprises 840 residues: Protein translocase subunit SecA (840 aa).

ATP is bound by residues glutamine 85, 103–107, and aspartate 492; that span reads GEGKT. Positions 787 to 822 are disordered; the sequence is QRERVAKETGASHGGDSQEVKKKPVKKEPKVGRNDL. Basic and acidic residues predominate over residues 802-819; sequence DSQEVKKKPVKKEPKVGR. Residues cysteine 823, cysteine 825, cysteine 834, and cysteine 835 each coordinate Zn(2+).

The protein belongs to the SecA family. In terms of assembly, monomer and homodimer. Part of the essential Sec protein translocation apparatus which comprises SecA, SecYEG and auxiliary proteins SecDF. Other proteins may also be involved. The cofactor is Zn(2+).

It localises to the cell membrane. The protein resides in the cytoplasm. It catalyses the reaction ATP + H2O + cellular proteinSide 1 = ADP + phosphate + cellular proteinSide 2.. In terms of biological role, part of the Sec protein translocase complex. Interacts with the SecYEG preprotein conducting channel. Has a central role in coupling the hydrolysis of ATP to the transfer of proteins into and across the cell membrane, serving as an ATP-driven molecular motor driving the stepwise translocation of polypeptide chains across the membrane. This chain is Protein translocase subunit SecA, found in Clostridium perfringens (strain ATCC 13124 / DSM 756 / JCM 1290 / NCIMB 6125 / NCTC 8237 / Type A).